Here is an 812-residue protein sequence, read N- to C-terminus: Hyaluronate lyase HylB (812 aa).

The tat-type signal signal peptide spans 1–32; that stretch reads MFGTPSRRTFLTASALSAMALAASPTVTDAIA. Catalysis depends on residues N222, H272, and Y281.

This sequence belongs to the polysaccharide lyase 8 family. In terms of processing, predicted to be exported by the Tat system. The position of the signal peptide cleavage has been experimentally proven.

Its subcellular location is the secreted. The catalysed reaction is [hyaluronan](n) = n 3-(4-deoxy-beta-D-gluc-4-enuronosyl)-N-acetyl-D-glucosamine + H2O. In terms of biological role, degrades hyaluronic acid (HA) exclusively into HA disaccharides (HA-2). Produced HA-2s confer anti-inflammatory properties leading to reduced immunopathology in the mouse model of acne. The protein is Hyaluronate lyase HylB of Cutibacterium acnes (Propionibacterium acnes).